The sequence spans 411 residues: Mitogen-activated protein kinase 8 (411 aa).

Residues 26–321 (YQNLKPIGSG…VDEALQHPYI (296 aa)) enclose the Protein kinase domain. ATP contacts are provided by residues 32–40 (IGSGAQGIV) and lysine 55. An S-nitrosocysteine; in inhibited form modification is found at cysteine 116. Residue aspartate 151 is the Proton acceptor of the active site. Threonine 183 carries the post-translational modification Phosphothreonine; by MAP2K7. Positions 183-185 (TPY) match the TXY motif. Phosphotyrosine; by MAP2K4 is present on tyrosine 185. The interval 368-411 (KNGVIRGQPSPLGAAVINGSQHPVSSPSVNDMSSMSTDPTLASD) is disordered. At serine 377 the chain carries Phosphoserine. The span at 390-403 (PVSSPSVNDMSSMS) shows a compositional bias: low complexity.

This sequence belongs to the protein kinase superfamily. CMGC Ser/Thr protein kinase family. MAP kinase subfamily. In terms of assembly, forms a complex with MAPK8IP1 and ARHGEF28. Found in a complex with SH3RF1, RAC1, MAP3K11/MLK3, MAP2K7/MKK7 and MAPK8IP1/JIP1. Found in a complex with SH3RF1, RAC2, MAP3K7/TAK1, MAP2K7/MKK7, MAPK8IP1/JIP1 and MAPK9/JNK2. Binds to at least four scaffolding proteins, MAPK8IP1/JIP-1, MAPK8IP2/JIP-2, MAPK8IP3/JIP-3/JSAP1 and SPAG9/MAPK8IP4/JIP-4. These proteins also bind other components of the JNK signaling pathway. Interacts with TP53, WWOX. Interacts with JAMP. Interacts with NFATC4. Interacts (phosphorylated form) with NFE2; the interaction phosphorylates NFE2 in undifferentiated cells. Interacts with MECOM; regulates JNK signaling. Interacts with PIN1; this interaction mediates MAPK8 conformational changes leading to the binding of MAPK8 to its substrates. Interacts with HSF1 (via D domain and preferentially with hyperphosphorylated form); this interaction occurs under both normal growth conditions and immediately upon heat shock. Interacts with STMN2, STMN3 and STMN4. Interacts with GRIPAP1. Interacts with POU5F1; phosphorylates POU5F1 at 'Ser-347'. Interacts with HSF4. Mg(2+) serves as cofactor. In terms of processing, dually phosphorylated on Thr-183 and Tyr-185 by MAP2K7 and MAP2K4, which activates the enzyme. Phosphorylated by TAOK2. Phosphorylated form is more concentrated at synapses than none-phosphorylated. Post-translationally, nitrosylated upon IFN-gamma-induced endogenous NO production, which inhibits the enzyme. May be phosphorylated at Thr-183 and Tyr-185 by MAP3K1/MEKK1.

The protein resides in the cytoplasm. Its subcellular location is the nucleus. The protein localises to the synapse. The enzyme catalyses L-seryl-[protein] + ATP = O-phospho-L-seryl-[protein] + ADP + H(+). It catalyses the reaction L-threonyl-[protein] + ATP = O-phospho-L-threonyl-[protein] + ADP + H(+). Activated by threonine and tyrosine phosphorylation by either of two dual specificity kinases, MAP2K4 and MAP2K7. MAP2K4 shows a strong preference for Tyr-185 while MAP2K7 phosphorylates Tyr-183 preferentially. Inhibited by dual specificity phosphatases, such as DUSP1. Inhibited by SERPINB3. Inhibited by IFN-gamma-induced S-nitrosylation. In terms of biological role, serine/threonine-protein kinase involved in various processes such as cell proliferation, differentiation, migration, transformation and programmed cell death. Extracellular stimuli such as pro-inflammatory cytokines or physical stress stimulate the stress-activated protein kinase/c-Jun N-terminal kinase (SAP/JNK) signaling pathway. In this cascade, two dual specificity kinases MAP2K4/MKK4 and MAP2K7/MKK7 phosphorylate and activate MAPK8/JNK1. In turn, MAPK8/JNK1 phosphorylates a number of transcription factors, primarily components of AP-1 such as JUN, JDP2 and ATF2 and thus regulates AP-1 transcriptional activity. Phosphorylates the replication licensing factor CDT1, inhibiting the interaction between CDT1 and the histone H4 acetylase HBO1 to replication origins. Loss of this interaction abrogates the acetylation required for replication initiation. Promotes stressed cell apoptosis by phosphorylating key regulatory factors including p53/TP53 and Yes-associates protein YAP1. In T-cells, MAPK8 and MAPK9 are required for polarized differentiation of T-helper cells into Th1 cells. Contributes to the survival of erythroid cells by phosphorylating the antagonist of cell death BAD upon EPO stimulation. Mediates starvation-induced BCL2 phosphorylation, BCL2 dissociation from BECN1, and thus activation of autophagy. Phosphorylates STMN2 and hence regulates microtubule dynamics, controlling neurite elongation in cortical neurons. In the developing brain, through its cytoplasmic activity on STMN2, negatively regulates the rate of exit from multipolar stage and of radial migration from the ventricular zone. Phosphorylates several other substrates including heat shock factor protein 4 (HSF4), the deacetylase SIRT1, ELK1, or the E3 ligase ITCH. Phosphorylates the CLOCK-BMAL1 heterodimer and plays a role in the regulation of the circadian clock. Phosphorylates the heat shock transcription factor HSF1, suppressing HSF1-induced transcriptional activity. Phosphorylates POU5F1, which results in the inhibition of POU5F1's transcriptional activity and enhances its proteasomal degradation. Phosphorylates JUND and this phosphorylation is inhibited in the presence of MEN1. In neurons, phosphorylates SYT4 which captures neuronal dense core vesicles at synapses. Phosphorylates EIF4ENIF1/4-ET in response to oxidative stress, promoting P-body assembly. Phosphorylates SIRT6 in response to oxidative stress, stimulating its mono-ADP-ribosyltransferase activity. Phosphorylates NLRP3, promoting assembly of the NLRP3 inflammasome. Phosphorylates ALKBH5 in response to reactive oxygen species (ROS), promoting ALKBH5 sumoylation and inactivation. The chain is Mitogen-activated protein kinase 8 (Mapk8) from Rattus norvegicus (Rat).